The chain runs to 226 residues: Glutathione peroxidase 3 (226 aa).

An N-terminal signal peptide occupies residues Met1–Gly24. Sec73 is an active-site residue. A non-standard amino acid (selenocysteine) is located at residue Sec73.

Belongs to the glutathione peroxidase family. In terms of assembly, homotetramer. In terms of tissue distribution, secreted in plasma.

The protein localises to the secreted. It carries out the reaction 2 glutathione + H2O2 = glutathione disulfide + 2 H2O. It catalyses the reaction tert-butyl hydroperoxide + 2 glutathione = tert-butanol + glutathione disulfide + H2O. In terms of biological role, protects cells and enzymes from oxidative damage, by catalyzing the reduction of hydrogen peroxide, lipid peroxides and organic hydroperoxide, by glutathione. In Hylobates lar (Lar gibbon), this protein is Glutathione peroxidase 3.